The following is a 470-amino-acid chain: Light-independent protochlorophyllide reductase subunit N (470 aa).

[4Fe-4S] cluster-binding residues include Cys22, Cys47, and Cys107.

This sequence belongs to the BchN/ChlN family. In terms of assembly, protochlorophyllide reductase is composed of three subunits; ChlL, ChlN and ChlB. Forms a heterotetramer of two ChlB and two ChlN subunits. [4Fe-4S] cluster serves as cofactor.

It is found in the plastid. Its subcellular location is the chloroplast. The catalysed reaction is chlorophyllide a + oxidized 2[4Fe-4S]-[ferredoxin] + 2 ADP + 2 phosphate = protochlorophyllide a + reduced 2[4Fe-4S]-[ferredoxin] + 2 ATP + 2 H2O. It functions in the pathway porphyrin-containing compound metabolism; chlorophyll biosynthesis (light-independent). Functionally, component of the dark-operative protochlorophyllide reductase (DPOR) that uses Mg-ATP and reduced ferredoxin to reduce ring D of protochlorophyllide (Pchlide) to form chlorophyllide a (Chlide). This reaction is light-independent. The NB-protein (ChlN-ChlB) is the catalytic component of the complex. The protein is Light-independent protochlorophyllide reductase subunit N of Pinus koraiensis (Korean pine).